The chain runs to 252 residues: Delta-like protein dsl-1 (252 aa).

The first 17 residues, 1 to 17, serve as a signal peptide directing secretion; the sequence is MLKYLIFLAILISVVHS. Positions 120–164 constitute a DSL domain; sequence IKCNRYWHGLHCDHFCNDDFARTINRRCTQNGTLGCLEGFHGPNC. Disulfide bonds link cysteine 122–cysteine 131, cysteine 135–cysteine 147, cysteine 155–cysteine 164, cysteine 173–cysteine 181, cysteine 175–cysteine 197, and cysteine 199–cysteine 209. Residues 169-210 form the EGF-like domain; the sequence is PADSCKCQNGGKCVSSLENTWAQNGSLICECRLGHFEGKHCE.

As to quaternary structure, may interact with lin-12/Notch receptor.

The protein localises to the secreted. Functionally, probable secreted Notch ligand involved in the mediation of Notch signaling. Involved in the lin-12/Notch pathway-mediated signaling of cell fate in vulval precursor cells (VPCs), acting redundantly with lag-2, apx-1 and osm-11. May also be involved in glp-1/Notch signaling. The polypeptide is Delta-like protein dsl-1 (Caenorhabditis elegans).